The sequence spans 128 residues: MFS18 protein (128 aa).

The signal sequence occupies residues 1 to 25 (MARSSKMMVAARLLALALAVSTAEA). Residues 26 to 79 (RNIKTTTTEKKDDAVVQPQTFPPFDRLGGGASPAFGGLPGGSIPGSSIPGFSMP) form a disordered region. The span at 52–68 (LGGGASPAFGGLPGGSI) shows a compositional bias: gly residues. 11 tandem repeats follow at residues 64-67 (PGGS), 64-75 (PGGSIPGSSIPG), 69-72 (PGSS), 69-80 (PGSSIPGFSMPG), 74-77 (PGFS), 79-82 (PGSG), 81-92 (SGSSLPGFSLPG), 86-89 (PGFS), 91-94 (PGSG), 104-107 (PGFS), and 113-116 (PGSP). Residues 64 to 92 (PGGSIPGSSIPGFSMPGSGSSLPGFSLPG) are 3 X approximate tandem repeats. The tract at residues 64–116 (PGGSIPGSSIPGFSMPGSGSSLPGFSLPGSGTMPLFGGGSPGFSGFGGMPGSP) is 8 X 4 AA approximate repeats. Over residues 69 to 79 (PGSSIPGFSMP) the composition is skewed to low complexity. The segment covering 99 to 113 (FGGGSPGFSGFGGMP) has biased composition (gly residues). Residues 99–128 (FGGGSPGFSGFGGMPGSPTAGSVPEHANKP) form a disordered region.

Enhanced expression in male flowers. Accumulates in the glumes and in anther walls, paleas and lemmas of mature florets.

This chain is MFS18 protein (MFS18), found in Zea mays (Maize).